A 146-amino-acid chain; its full sequence is uncharacterized protein (146 aa).

This sequence belongs to the BlaI transcriptional regulatory family.

This is an uncharacterized protein from Latilactobacillus sakei (Lactobacillus sakei).